The following is a 339-amino-acid chain: Anthranilate phosphoribosyltransferase (339 aa).

5-phospho-alpha-D-ribose 1-diphosphate contacts are provided by residues Gly82, 85-86, Thr90, 92-95, and 110-118; these read GD, NIST, and KHGNRAVSS. Gly82 is an anthranilate binding site. Position 94 (Ser94) interacts with Mg(2+). Residues Asn113 and Arg168 each contribute to the anthranilate site. Mg(2+)-binding residues include Asp227 and Glu228.

It belongs to the anthranilate phosphoribosyltransferase family. In terms of assembly, homodimer. It depends on Mg(2+) as a cofactor.

It catalyses the reaction N-(5-phospho-beta-D-ribosyl)anthranilate + diphosphate = 5-phospho-alpha-D-ribose 1-diphosphate + anthranilate. It functions in the pathway amino-acid biosynthesis; L-tryptophan biosynthesis; L-tryptophan from chorismate: step 2/5. Its function is as follows. Catalyzes the transfer of the phosphoribosyl group of 5-phosphorylribose-1-pyrophosphate (PRPP) to anthranilate to yield N-(5'-phosphoribosyl)-anthranilate (PRA). The polypeptide is Anthranilate phosphoribosyltransferase (Clostridium beijerinckii (strain ATCC 51743 / NCIMB 8052) (Clostridium acetobutylicum)).